A 132-amino-acid polypeptide reads, in one-letter code: Small ribosomal subunit protein uS8 (132 aa).

The protein belongs to the universal ribosomal protein uS8 family. As to quaternary structure, part of the 30S ribosomal subunit. Contacts proteins S5 and S12.

In terms of biological role, one of the primary rRNA binding proteins, it binds directly to 16S rRNA central domain where it helps coordinate assembly of the platform of the 30S subunit. This is Small ribosomal subunit protein uS8 from Geotalea daltonii (strain DSM 22248 / JCM 15807 / FRC-32) (Geobacter daltonii).